A 232-amino-acid polypeptide reads, in one-letter code: MQGSRLIVALDTASWEQALKWVDRLPQVLWWKVGLELFTAVGPQILQALKERGKRIFLDLKLHDIPHTVGRAAQVAVGYGVDLLTVHAAGGSAMLRAAVAATQGSSCRLLAVTLLTSLGPDQVRQELGVERDPGDYVLQLARLALDQGVSGLVCSPQEVGRLRQALGPEVLLVTPGIRLGDPEAEDDQRRVCTPAAALRAGADYLVVGRPITAAADPVSAWQRFQAVEEAIG.

Substrate-binding positions include Asp-11, Lys-32, 59 to 68 (DLKLHDIPHT), Thr-116, Arg-178, Gln-188, Gly-208, and Arg-209. Lys-61 serves as the catalytic Proton donor.

It belongs to the OMP decarboxylase family. Type 1 subfamily. Homodimer.

It carries out the reaction orotidine 5'-phosphate + H(+) = UMP + CO2. It participates in pyrimidine metabolism; UMP biosynthesis via de novo pathway; UMP from orotate: step 2/2. Catalyzes the decarboxylation of orotidine 5'-monophosphate (OMP) to uridine 5'-monophosphate (UMP). This Synechococcus sp. (strain JA-3-3Ab) (Cyanobacteria bacterium Yellowstone A-Prime) protein is Orotidine 5'-phosphate decarboxylase.